We begin with the raw amino-acid sequence, 224 residues long: MIGRLSGVLVYRGRDHIVLDVRGVGYVVQCSERTLAGMPAPGGPVALFTELLVREDLLQLYGFPTLLEKEWHRLLTSVQGVGAKASMSILSTLGVDGVGRAIALGDWGALRKAQGVGPKIAQRVVNELKDKGPEVMAMGGTLEAALDGVIEDGMAASEGIEPPSAARPAVPSAASDQAGALSALVNLGYGQGEAASAVATAAGEGAVGETDIIRAALRLLAPKG.

Residues methionine 1–proline 64 form a domain I region. Residues threonine 65 to glutamate 143 are domain II. A flexible linker region spans residues alanine 144–proline 171. A domain III region spans residues serine 172–glycine 224.

The protein belongs to the RuvA family. Homotetramer. Forms an RuvA(8)-RuvB(12)-Holliday junction (HJ) complex. HJ DNA is sandwiched between 2 RuvA tetramers; dsDNA enters through RuvA and exits via RuvB. An RuvB hexamer assembles on each DNA strand where it exits the tetramer. Each RuvB hexamer is contacted by two RuvA subunits (via domain III) on 2 adjacent RuvB subunits; this complex drives branch migration. In the full resolvosome a probable DNA-RuvA(4)-RuvB(12)-RuvC(2) complex forms which resolves the HJ.

It localises to the cytoplasm. Functionally, the RuvA-RuvB-RuvC complex processes Holliday junction (HJ) DNA during genetic recombination and DNA repair, while the RuvA-RuvB complex plays an important role in the rescue of blocked DNA replication forks via replication fork reversal (RFR). RuvA specifically binds to HJ cruciform DNA, conferring on it an open structure. The RuvB hexamer acts as an ATP-dependent pump, pulling dsDNA into and through the RuvAB complex. HJ branch migration allows RuvC to scan DNA until it finds its consensus sequence, where it cleaves and resolves the cruciform DNA. This chain is Holliday junction branch migration complex subunit RuvA, found in Dinoroseobacter shibae (strain DSM 16493 / NCIMB 14021 / DFL 12).